We begin with the raw amino-acid sequence, 577 residues long: ER degradation-enhancing alpha-mannosidase-like protein 2 (577 aa).

An N-terminal signal peptide occupies residues 1–21 (MPFRLLIPLGLVCVLLPLHHG). N-linked (GlcNAc...) asparagine glycosylation is found at Asn90, Asn112, Asn289, and Asn450. The disordered stretch occupies residues 513–561 (PKRAQRKTVRSGPWEPQSGPATLSSPANQPREKQPAQQRTPLLSCPSQP). 2 stretches are compositionally biased toward polar residues: residues 531-540 (GPATLSSPAN) and 547-561 (PAQQ…PSQP).

This sequence belongs to the glycosyl hydrolase 47 family. N-glycosylated.

It localises to the endoplasmic reticulum lumen. Involved in the endoplasmic reticulum-associated degradation (ERAD) pathway that targets misfolded glycoproteins for degradation in an N-glycan-dependent manner. May initiate ERAD by promoting the first mannose trimming step of ERAD substrates, from Man9GlcNAc2 to Man8GlcNAc2. Seems to recognize and bind to exposed hydrophobic regions in target proteins. This Mus musculus (Mouse) protein is ER degradation-enhancing alpha-mannosidase-like protein 2.